A 146-amino-acid chain; its full sequence is Snaclec anticoagulant protein subunit B (146 aa).

An N-terminal signal peptide occupies residues 1 to 23 (MGRFIFVSFGLLVLFLSLSGTAA). One can recognise a C-type lectin domain in the interval 24 to 146 (DCPSDWSSYE…IANFVCEFQA (123 aa)). Cystine bridges form between Cys-25/Cys-36, Cys-53/Cys-142, and Cys-119/Cys-134. Residues Ser-64, Gln-66, and Glu-70 each coordinate Ca(2+). Residue Glu-143 participates in Ca(2+) binding.

It belongs to the snaclec family. As to quaternary structure, heterodimer with subunit A of agkisacutacin or AaACP; disulfide-linked. Expressed by the venom gland.

It localises to the secreted. Its function is as follows. Anticoagulant protein which binds to the gamma-carboxyglutamic acid-domain regions of factors IX and factor X in the presence of calcium with a 1 to 1 stoichiometry. Also inhibits platelet aggregation by binding to platelet glycoprotein Ibalpha (GP1BA) and functioning as a blocker of vWF. Is devoid of hemorrhagic and lethal activities. Possesses antithrombotic and thrombolytic activities. Also hydrolyzes the Aalpha-chain of fibrinogen. Does not affect the Bbeta-chain and the gamma chain. In Deinagkistrodon acutus (Hundred-pace snake), this protein is Snaclec anticoagulant protein subunit B.